The sequence spans 385 residues: Succinate--CoA ligase [ADP-forming] subunit beta (385 aa).

Positions 9-237 constitute an ATP-grasp domain; the sequence is KEILRQFGVN…LEAEHPLEIE (229 aa). ATP-binding positions include Lys45, 52-54, Val94, and Glu101; that span reads GRG. 2 residues coordinate Mg(2+): Asn192 and Asp206. Substrate is bound by residues Asn257 and 314-316; that span reads GIT.

This sequence belongs to the succinate/malate CoA ligase beta subunit family. As to quaternary structure, heterotetramer of two alpha and two beta subunits. Requires Mg(2+) as cofactor.

The catalysed reaction is succinate + ATP + CoA = succinyl-CoA + ADP + phosphate. It carries out the reaction GTP + succinate + CoA = succinyl-CoA + GDP + phosphate. Its pathway is carbohydrate metabolism; tricarboxylic acid cycle; succinate from succinyl-CoA (ligase route): step 1/1. In terms of biological role, succinyl-CoA synthetase functions in the citric acid cycle (TCA), coupling the hydrolysis of succinyl-CoA to the synthesis of either ATP or GTP and thus represents the only step of substrate-level phosphorylation in the TCA. The beta subunit provides nucleotide specificity of the enzyme and binds the substrate succinate, while the binding sites for coenzyme A and phosphate are found in the alpha subunit. This is Succinate--CoA ligase [ADP-forming] subunit beta from Deinococcus deserti (strain DSM 17065 / CIP 109153 / LMG 22923 / VCD115).